Reading from the N-terminus, the 375-residue chain is tRNA-specific 2-thiouridylase MnmA (375 aa).

ATP contacts are provided by residues 16–23 and methionine 42; that span reads GMSGGVDS. The tract at residues 102–104 is interaction with target base in tRNA; sequence NPD. The Nucleophile role is filled by cysteine 107. A disulfide bond links cysteine 107 and cysteine 203. Residue glycine 131 participates in ATP binding. Residues 153 to 155 are interaction with tRNA; sequence KDQ. The Cysteine persulfide intermediate role is filled by cysteine 203. The segment at 315 to 316 is interaction with tRNA; that stretch reads RY.

It belongs to the MnmA/TRMU family.

Its subcellular location is the cytoplasm. It catalyses the reaction S-sulfanyl-L-cysteinyl-[protein] + uridine(34) in tRNA + AH2 + ATP = 2-thiouridine(34) in tRNA + L-cysteinyl-[protein] + A + AMP + diphosphate + H(+). In terms of biological role, catalyzes the 2-thiolation of uridine at the wobble position (U34) of tRNA, leading to the formation of s(2)U34. The polypeptide is tRNA-specific 2-thiouridylase MnmA (Pseudomonas aeruginosa (strain LESB58)).